Consider the following 251-residue polypeptide: Ubiquinone/menaquinone biosynthesis C-methyltransferase UbiE (251 aa).

Residues Thr-74, Asp-95, and 123 to 124 (NA) contribute to the S-adenosyl-L-methionine site.

This sequence belongs to the class I-like SAM-binding methyltransferase superfamily. MenG/UbiE family.

It catalyses the reaction a 2-demethylmenaquinol + S-adenosyl-L-methionine = a menaquinol + S-adenosyl-L-homocysteine + H(+). It carries out the reaction a 2-methoxy-6-(all-trans-polyprenyl)benzene-1,4-diol + S-adenosyl-L-methionine = a 5-methoxy-2-methyl-3-(all-trans-polyprenyl)benzene-1,4-diol + S-adenosyl-L-homocysteine + H(+). The protein operates within quinol/quinone metabolism; menaquinone biosynthesis; menaquinol from 1,4-dihydroxy-2-naphthoate: step 2/2. Its pathway is cofactor biosynthesis; ubiquinone biosynthesis. In terms of biological role, methyltransferase required for the conversion of demethylmenaquinol (DMKH2) to menaquinol (MKH2) and the conversion of 2-polyprenyl-6-methoxy-1,4-benzoquinol (DDMQH2) to 2-polyprenyl-3-methyl-6-methoxy-1,4-benzoquinol (DMQH2). This is Ubiquinone/menaquinone biosynthesis C-methyltransferase UbiE from Shewanella woodyi (strain ATCC 51908 / MS32).